The following is a 608-amino-acid chain: Pentatricopeptide repeat-containing protein At5g40410, mitochondrial (608 aa).

The N-terminal 28 residues, 1–28 (MIKANVYSCSKFRFLYRRRFLSQSSFVH), are a transit peptide targeting the mitochondrion. PPR repeat units lie at residues 30-64 (LDAN…VSYR), 65-95 (HGFI…MPER), 96-130 (DLVS…EVGF), 133-167 (NEVT…GVLE), 168-198 (EVKV…LSIK), 199-233 (NLVS…GHEP), 234-268 (DQAT…GFSG), 269-299 (NKCI…ITSP), 300-334 (DSMA…GISP), 335-365 (DHVT…MSKR), and 371-401 (RLDH…MPME). The type E motif stretch occupies residues 406–481 (VWGALLGACR…ASGCSYIEHG (76 aa)). Residues 482–512 (NKIHKFVVGDWSHPESEKIQKKLKEIRKKMK) are type E(+) motif. Residues 514 to 608 (EMGYKSKTEF…DGSCSCSDYW (95 aa)) are type DYW motif.

Belongs to the PPR family. PCMP-H subfamily.

It is found in the mitochondrion. The sequence is that of Pentatricopeptide repeat-containing protein At5g40410, mitochondrial (PCMP-H15) from Arabidopsis thaliana (Mouse-ear cress).